The sequence spans 329 residues: Quinone oxidoreductase (329 aa).

Alanine 2 carries the N-acetylalanine modification. N6-acetyllysine is present on lysine 23. Residues tyrosine 53, 158–161 (SGGV), glycine 181, histidine 200, asparagine 229, 246–249 (VGSR), and 269–271 (VTV) each bind NADP(+). Phosphoserine is present on serine 248. At lysine 296 the chain carries N6-succinyllysine.

This sequence belongs to the zinc-containing alcohol dehydrogenase family. Quinone oxidoreductase subfamily. Homotetramer.

It localises to the cytoplasm. It catalyses the reaction 2 a quinone + NADPH + H(+) = 2 a 1,4-benzosemiquinone + NADP(+). Functionally, does not have alcohol dehydrogenase activity. Binds NADP and acts through a one-electron transfer process. Orthoquinones, such as 1,2-naphthoquinone or 9,10-phenanthrenequinone, are the best substrates (in vitro). May act in the detoxification of xenobiotics. Interacts with (AU)-rich elements (ARE) in the 3'-UTR of target mRNA species and enhances their stability. NADPH binding interferes with mRNA binding. The sequence is that of Quinone oxidoreductase (CRYZ) from Pongo abelii (Sumatran orangutan).